The chain runs to 438 residues: Trigger factor (438 aa).

Residues 160 to 245 (DDKVVIDFVG…VKKIQEAQLP (86 aa)) enclose the PPIase FKBP-type domain.

It belongs to the FKBP-type PPIase family. Tig subfamily.

The protein localises to the cytoplasm. The catalysed reaction is [protein]-peptidylproline (omega=180) = [protein]-peptidylproline (omega=0). In terms of biological role, involved in protein export. Acts as a chaperone by maintaining the newly synthesized protein in an open conformation. Functions as a peptidyl-prolyl cis-trans isomerase. The chain is Trigger factor from Francisella philomiragia subsp. philomiragia (strain ATCC 25017 / CCUG 19701 / FSC 153 / O#319-036).